The sequence spans 363 residues: Adenosine deaminase (363 aa).

His42 and His44 together coordinate Zn(2+). Residues 44 to 46 (HLD), Asp172, and Gly201 contribute to the a purine D-ribonucleoside site. Residues 170 to 184 (IGDTGHEAANIKASA) are gating helix loop; regulates binding affinity for substrates and thus substrate selectivity. His226 serves as a coordination point for Zn(2+). Positions 229, 253, and 310 each coordinate a purine D-ribonucleoside. Position 310 (Asp310) interacts with Zn(2+).

The protein belongs to the metallo-dependent hydrolases superfamily. Adenosine and AMP deaminases family. Requires Zn(2+) as cofactor.

The enzyme catalyses adenosine + H2O + H(+) = inosine + NH4(+). It carries out the reaction S-methyl-5'-thioadenosine + H2O + H(+) = S-methyl-5'-thioinosine + NH4(+). Its pathway is purine metabolism; purine nucleoside salvage. Inhibited by coformycin and methylthiocoformycin (MT-coformycin). Its function is as follows. Catalyzes the hydrolytic deamination of adenosine to produce inosine. Unlike mammalian adenosine deaminases, also catalyzes the deamination of 5'-methylthioadenosine (MTA), a by-product of polyamine biosynthesis, to produce 5'-methylthioinosine (MTI). Plays an essential role in the purine salvage pathway which allows the parasite to use host cell purines for the synthesis of nucleic acids. The sequence is that of Adenosine deaminase from Plasmodium cynomolgi (strain B).